The primary structure comprises 377 residues: Protein-arginine rhamnosyltransferase (377 aa).

Residue tyrosine 15 participates in dTDP-beta-L-rhamnose binding. Catalysis depends on aspartate 17, which acts as the Proton acceptor. Residues tyrosine 193, glutamine 255, and arginine 271–serine 275 each bind dTDP-beta-L-rhamnose. Glutamate 273 is an active-site residue.

It belongs to the glycosyltransferase 104 family.

It catalyses the reaction dTDP-beta-L-rhamnose + L-arginyl-[protein] = N(omega)-(alpha-L-rhamnosyl)-L-arginyl-[protein] + dTDP + H(+). Functionally, protein-arginine rhamnosyltransferase that catalyzes the transfer of a single rhamnose to elongation factor P (EF-P) on 'Lys-32', a modification required for EF-P-dependent rescue of polyproline stalled ribosomes. This chain is Protein-arginine rhamnosyltransferase, found in Pseudomonas putida (strain ATCC 47054 / DSM 6125 / CFBP 8728 / NCIMB 11950 / KT2440).